A 157-amino-acid polypeptide reads, in one-letter code: Small ribosomal subunit protein uS7 (157 aa).

It belongs to the universal ribosomal protein uS7 family. In terms of assembly, part of the 30S ribosomal subunit. Contacts proteins S9 and S11.

In terms of biological role, one of the primary rRNA binding proteins, it binds directly to 16S rRNA where it nucleates assembly of the head domain of the 30S subunit. Is located at the subunit interface close to the decoding center, probably blocks exit of the E-site tRNA. This Borrelia garinii subsp. bavariensis (strain ATCC BAA-2496 / DSM 23469 / PBi) (Borreliella bavariensis) protein is Small ribosomal subunit protein uS7.